Reading from the N-terminus, the 178-residue chain is Protein GrpE (178 aa).

Positions 1-26 (MQDQDKYAEQAASMEEPASADAPAIV) are disordered.

Belongs to the GrpE family. In terms of assembly, homodimer.

The protein localises to the cytoplasm. Participates actively in the response to hyperosmotic and heat shock by preventing the aggregation of stress-denatured proteins, in association with DnaK and GrpE. It is the nucleotide exchange factor for DnaK and may function as a thermosensor. Unfolded proteins bind initially to DnaJ; upon interaction with the DnaJ-bound protein, DnaK hydrolyzes its bound ATP, resulting in the formation of a stable complex. GrpE releases ADP from DnaK; ATP binding to DnaK triggers the release of the substrate protein, thus completing the reaction cycle. Several rounds of ATP-dependent interactions between DnaJ, DnaK and GrpE are required for fully efficient folding. The chain is Protein GrpE from Herminiimonas arsenicoxydans.